Here is a 900-residue protein sequence, read N- to C-terminus: 3'-5' exonuclease DinG (900 aa).

The region spanning Val-8–Leu-161 is the Exonuclease domain. Residues Ser-241–Arg-496 enclose the Helicase ATP-binding domain. Ala-276–Ser-283 lines the ATP pocket. A DEAH box motif is present at residues Asp-448–His-451. The region spanning Asp-713–Gln-893 is the Helicase C-terminal domain.

The protein belongs to the helicase family. DinG subfamily. Type 2 sub-subfamily.

Its function is as follows. 3'-5' exonuclease. In Staphylococcus haemolyticus (strain JCSC1435), this protein is 3'-5' exonuclease DinG.